Consider the following 411-residue polypeptide: Serine hydroxymethyltransferase (411 aa).

Residues Leu-119 and 123–125 each bind (6S)-5,6,7,8-tetrahydrofolate; that span reads GHL. An N6-(pyridoxal phosphate)lysine modification is found at Lys-228. 351-353 is a (6S)-5,6,7,8-tetrahydrofolate binding site; sequence SPF.

The protein belongs to the SHMT family. Homodimer. The cofactor is pyridoxal 5'-phosphate.

The protein localises to the cytoplasm. The catalysed reaction is (6R)-5,10-methylene-5,6,7,8-tetrahydrofolate + glycine + H2O = (6S)-5,6,7,8-tetrahydrofolate + L-serine. The protein operates within one-carbon metabolism; tetrahydrofolate interconversion. It participates in amino-acid biosynthesis; glycine biosynthesis; glycine from L-serine: step 1/1. Catalyzes the reversible interconversion of serine and glycine with tetrahydrofolate (THF) serving as the one-carbon carrier. This reaction serves as the major source of one-carbon groups required for the biosynthesis of purines, thymidylate, methionine, and other important biomolecules. Also exhibits THF-independent aldolase activity toward beta-hydroxyamino acids, producing glycine and aldehydes, via a retro-aldol mechanism. The protein is Serine hydroxymethyltransferase of Clostridium beijerinckii (strain ATCC 51743 / NCIMB 8052) (Clostridium acetobutylicum).